Reading from the N-terminus, the 255-residue chain is MTSILVSRFLIAALVLQYATSDAVNYCRLPCRGCDYHVGCGEPAYAQECGQSPRTRELLKEHRNEILSKINDVRDHVAKGSWGLPMAARMKVVVWDAELAGLAKRHTKGCVGETHACRNTERFWLPGQLNFKYSGDKLPRIRELIDDAVKKGHLQKHNITREFIENYRENGPNGNVKGLALAISDRVTAVGCGLTTWEDGAKARALLTCNFSSQNIRGRPVYKIGNSPGEKCIEKDETYKNLCSATEPIDPNKSN.

An N-terminal signal peptide occupies residues Met1–Ala23. Residues Leu67–Phe211 enclose the SCP domain.

This sequence belongs to the CRISP family. Expressed in salivary glands.

The protein localises to the secreted. Inhibits platelet aggregation induced by all agonists tested. May act by competing with fibrinogen for binding to glycoprotein IIb/IIIa (ITGA2B/ITGB3). This is Tabinhibitin 1 from Tabanus yao (Horsefly).